The following is a 223-amino-acid chain: Ras-related protein Rab-21 (223 aa).

N-acetylalanine is present on Ala-2. 10 residues coordinate GTP: Gly-26, Gly-29, Lys-30, Thr-31, Ser-32, Asn-43, Asp-44, His-46, Thr-48, and Thr-49. Thr-31 lines the Mg(2+) pocket. A Switch 1 motif is present at residues Lys-41 to Phe-54. Mg(2+) contacts are provided by Thr-49 and Asp-72. Positions Ala-74 to Gly-92 match the Switch 2 motif. The GTP site is built by Gly-75, Asn-130, Lys-131, Asp-133, Ala-161, and Lys-162. S-geranylgeranyl cysteine attachment occurs at residues Cys-219 and Cys-220. Position 220 is a cysteine methyl ester (Cys-220). Positions Ser-221–Gly-223 are cleaved as a propeptide — removed in mature form.

The protein belongs to the small GTPase superfamily. Rab family. In terms of assembly, interacts with the cytoplasmic tail of integrins ITGA1, ITGA2, ITGA5, ITGA6, ITGA11 and ITGB1; this interaction is dependent upon its GDP/GTP cycle. Interacts with RABGEF1 (via VPS9 domain). Interacts with ANKRD27. Interacts (in GTP-bound form) with VAMP8 in response to starvation; the interaction probably regulates VAMP8 endolysosomal trafficking. Interacts (active GTP-bound form) with TMED10; the interaction is indirect and regulates TMED10 abundance and localization at the Golgi. Mg(2+) serves as cofactor.

Its subcellular location is the endoplasmic reticulum membrane. It is found in the golgi apparatus. The protein localises to the trans-Golgi network. It localises to the golgi apparatus membrane. The protein resides in the early endosome membrane. Its subcellular location is the cytoplasmic vesicle membrane. It is found in the cleavage furrow. The protein localises to the cell projection. It localises to the neuron projection. The catalysed reaction is GTP + H2O = GDP + phosphate + H(+). Regulated by guanine nucleotide exchange factors (GEFs) including ANKRD27 and RABGEF1, which promote the exchange of bound GDP for free GTP. Regulated by GTPase activating proteins (GAPs) which increase the GTP hydrolysis activity. Inhibited by GDP dissociation inhibitors (GDIs). Functionally, the small GTPases Rab are key regulators of intracellular membrane trafficking, from the formation of transport vesicles to their fusion with membranes. Rabs cycle between an inactive GDP-bound form and an active GTP-bound form that is able to recruit to membranes different sets of downstream effectors directly responsible for vesicle formation, movement, tethering and fusion. RAB21 is involved in membrane trafficking control. Regulates integrin internalization and recycling, but does not influence the traffic of endosomally translocated receptors in general. As a result, may regulate cell adhesion and migration. During the mitosis of adherent cells, controls the endosomal trafficking of integrins which is required for the successful completion of cytokinesis. Involved in neurite growth. Following SBF2/MTMT13-mediated activation in response to starvation-induced autophagy, binds to and regulates SNARE protein VAMP8 endolysosomal transport required for SNARE-mediated autophagosome-lysosome fusion. Modulates protein levels of the cargo receptors TMED2 and TMED10, and required for appropriate Golgi localization of TMED10. This chain is Ras-related protein Rab-21, found in Rattus norvegicus (Rat).